We begin with the raw amino-acid sequence, 161 residues long: Allophycocyanin alpha chain 2 (161 aa).

N4-methylasparagine is present on N71. A (2R,3E)-phycocyanobilin-binding site is contributed by C81.

It belongs to the phycobiliprotein family. Component of the phycobilisome. Heterodimer of an alpha and a beta chain. Post-translationally, contains one covalently linked bilin chromophore.

It is found in the cellular thylakoid membrane. Light-harvesting photosynthetic bile pigment-protein from the phycobiliprotein complex. Allophycocyanin has a maximum absorption at approximately 650 nanometers. The protein is Allophycocyanin alpha chain 2 (apcA2) of Microchaete diplosiphon (Fremyella diplosiphon).